Consider the following 916-residue polypeptide: DNA topoisomerase 1 alpha (916 aa).

The disordered stretch occupies residues 1–369 (MGTETVSKPV…SSPSSGDGQK (369 aa)). Positions 34-47 (SNSNQSKSNSQRSK) are enriched in low complexity. The segment covering 60–76 (PVTSPNGTTPSNKTSIV) has biased composition (polar residues). Low complexity predominate over residues 77 to 93 (KSSMPSSSSKASPAKSP). The span at 102–119 (VKDRSQLQKDQSECKIEH) shows a compositional bias: basic and acidic residues. A compositionally biased stretch (polar residues) spans 130–148 (SILSGNKGPTSSRQVSSPQ). Basic and acidic residues predominate over residues 149–168 (PEKKNNGDRPLDRASRIIKD). The residue at position 170 (Ser-170) is a Phosphoserine. The segment covering 230–239 (KNSSADQSSL) has biased composition (polar residues). Basic and acidic residues predominate over residues 253-267 (MKQDSVKKEIDDKGR). A compositionally biased stretch (acidic residues) spans 285–294 (GTDDDDDDDV). At Thr-286 the chain carries Phosphothreonine. Low complexity predominate over residues 354 to 366 (YSTSSKSSPSSGD). Interaction with DNA regions lie at residues 577–578 (KY), 640–645 (RAGNEK), and 731–733 (TAK). Positions 584-914 (GSSLKGLSDK…MDVEPEYRFS (331 aa)) constitute a Topo IB-type catalytic domain. The stretch at 778 to 860 (QRTVSKTHGA…ERDMHTKEDL (83 aa)) forms a coiled coil. Tyr-872 acts as the O-(3'-phospho-DNA)-tyrosine intermediate in catalysis.

The protein belongs to the type IB topoisomerase family. Interacts with DEK3. Expressed in inflorescence meristems. Expressed in primordia of sepals, petals, stamens, carpels and ovules. Expressed in midstage embryos.

It is found in the nucleus. It catalyses the reaction ATP-independent breakage of single-stranded DNA, followed by passage and rejoining.. Its function is as follows. Releases the supercoiling and torsional tension of DNA introduced during the DNA replication and transcription by transiently cleaving and rejoining one strand of the DNA duplex. Introduces a single-strand break via transesterification at a target site in duplex DNA. The scissile phosphodiester is attacked by the catalytic tyrosine of the enzyme, resulting in the formation of a DNA-(3'-phosphotyrosyl)-enzyme intermediate and the expulsion of a 5'-OH DNA strand. The free DNA strand then rotates around the intact phosphodiester bond on the opposing strand, thus removing DNA supercoils. Finally, in the religation step, the DNA 5'-OH attacks the covalent intermediate to expel the active-site tyrosine and restore the DNA phosphodiester backbone. Can complement a TOP1-deficient yeast mutant. Plays a critical role in the maintenance of a regular pattern of organ initiation. Topoisomerases I enzymes (TOP1A and TOP1B) are essential for plant survival. Functions together with the stem cell maintenance gene WUSCHEL (WUS) in stem cell regulation. Required to maintain developmentally regulated gene repression. Functions synergistically with chromatin remodeling factors. Is required for the repression of WUS expression in flower development. Plays a role in polycomb group (PcG) protein-mediated histone H3 trimethylation on 'Lys-27' (H3K27me3) at the WUS gene locus. H3K27me3 induces transcriptional repression of WUS. May assist AGAMOUS (AG) in recruiting PcG proteins to WUS locus. Reduces nucleosome density, especially at genes that are targets of PcG proteins. Plays a role in epigenetic silencing. Involved in RNA-directed DNA methylation (RdDM) by promoting Pol V transcription to generate long non-coding RNA transcripts. Is dispensable for Pol IV-mediated small interfering RNA (siRNA) biogenesis. Promotes transposable element (TE) silencing at endogenous RdDM target loci through histone H3 dimethylation of 'Lys-9' (H3K9me2). Promotes the production of Pol V-dependent long non-coding transcripts that facilitate the recruitment of siRNA-AGO4 and AGO4 occupancy at TEs. The chain is DNA topoisomerase 1 alpha from Arabidopsis thaliana (Mouse-ear cress).